The following is a 310-amino-acid chain: Bis(hydroxyethyl) terephthalate hydrolase (310 aa).

Positions 1-48 (MQQNPHTHAAPGAARPVLRGVRRRLAAVTAAVAAVLVLGTLTGPGAQA) form a signal peptide, tat-type signal. Position 111 (Phe-111) interacts with bis(2-hydroxyethyl) terephthalate. Ser-179 serves as the catalytic Nucleophile. Residues Met-180 and Trp-204 each coordinate bis(2-hydroxyethyl) terephthalate. Residues Asp-225 and His-257 each act as charge relay system in the active site. A disulfide bridge links Cys-290 with Cys-306.

This sequence belongs to the AB hydrolase superfamily. In terms of processing, predicted to be exported by the Tat system. The position of the signal peptide cleavage has not been experimentally proven.

Its subcellular location is the secreted. It carries out the reaction bis(2-hydroxyethyl) terephthalate + H2O = 4-[(2-hydroxyethoxy)carbonyl]benzoate + ethylene glycol + H(+). Catalyzes the degradation of bis(hydroxyethyl) terephthalate (BHET), a derived-oligomer of the plastic poly(ethylene terephthalate) (PET), hydrolyzing BHET to mono(2-hydroxyethyl) terephthalate (MHET). Shows no activity against PET. The chain is Bis(hydroxyethyl) terephthalate hydrolase from Streptomyces coelicolor (strain ATCC BAA-471 / A3(2) / M145).